Consider the following 382-residue polypeptide: 1-deoxy-D-xylulose 5-phosphate reductoisomerase (382 aa).

NADPH is bound by residues T10, G11, S12, I13, N38, and N120. A 1-deoxy-D-xylulose 5-phosphate-binding site is contributed by K121. NADPH is bound at residue E122. D146 is a Mn(2+) binding site. Residues S147, E148, S172, and H195 each contribute to the 1-deoxy-D-xylulose 5-phosphate site. E148 lines the Mn(2+) pocket. G201 lines the NADPH pocket. The 1-deoxy-D-xylulose 5-phosphate site is built by S208, N213, K214, and E217. E217 contributes to the Mn(2+) binding site.

This sequence belongs to the DXR family. The cofactor is Mg(2+). Mn(2+) serves as cofactor.

It catalyses the reaction 2-C-methyl-D-erythritol 4-phosphate + NADP(+) = 1-deoxy-D-xylulose 5-phosphate + NADPH + H(+). Its pathway is isoprenoid biosynthesis; isopentenyl diphosphate biosynthesis via DXP pathway; isopentenyl diphosphate from 1-deoxy-D-xylulose 5-phosphate: step 1/6. Functionally, catalyzes the NADPH-dependent rearrangement and reduction of 1-deoxy-D-xylulose-5-phosphate (DXP) to 2-C-methyl-D-erythritol 4-phosphate (MEP). This Thermoanaerobacter pseudethanolicus (strain ATCC 33223 / 39E) (Clostridium thermohydrosulfuricum) protein is 1-deoxy-D-xylulose 5-phosphate reductoisomerase.